The sequence spans 429 residues: Light-independent protochlorophyllide reductase subunit N (429 aa).

Residues C32, C57, and C118 each contribute to the [4Fe-4S] cluster site.

This sequence belongs to the BchN/ChlN family. In terms of assembly, protochlorophyllide reductase is composed of three subunits; BchL, BchN and BchB. Forms a heterotetramer of two BchB and two BchN subunits. Requires [4Fe-4S] cluster as cofactor.

The catalysed reaction is chlorophyllide a + oxidized 2[4Fe-4S]-[ferredoxin] + 2 ADP + 2 phosphate = protochlorophyllide a + reduced 2[4Fe-4S]-[ferredoxin] + 2 ATP + 2 H2O. The protein operates within porphyrin-containing compound metabolism; bacteriochlorophyll biosynthesis (light-independent). In terms of biological role, component of the dark-operative protochlorophyllide reductase (DPOR) that uses Mg-ATP and reduced ferredoxin to reduce ring D of protochlorophyllide (Pchlide) to form chlorophyllide a (Chlide). This reaction is light-independent. The NB-protein (BchN-BchB) is the catalytic component of the complex. This chain is Light-independent protochlorophyllide reductase subunit N, found in Rhodopseudomonas palustris (strain ATCC BAA-98 / CGA009).